Here is a 588-residue protein sequence, read N- to C-terminus: Putative calcium-binding mitochondrial carrier F55A11.4 (588 aa).

A compositionally biased stretch (polar residues) spans 1 to 14; that stretch reads MINKNEQTESTSGA. The tract at residues 1–25 is disordered; that stretch reads MINKNEQTESTSGAAEQKEDDEEQY. EF-hand domains follow at residues 73-108, 109-139, 140-175, and 176-211; these read EKER…ETPH, IPAN…SYVL, ENEQ…IGVP, and LDDH…YPSS. Residues Asp86, Asp88, Asp90, Thr92, and Asp97 each contribute to the Ca(2+) site. Residues Asp153, Asn155, Asp157, and Glu164 each coordinate Ca(2+). Solcar repeat units follow at residues 246–332, 342–428, and 440–529; these read GIWW…LKRL, ISTF…LKRT, and PGVL…VRTG. 6 helical membrane-spanning segments follow: residues 252 to 269, 307 to 326, 352 to 365, 403 to 422, 446 to 463, and 504 to 523; these read LVAG…TAPF, GNGI…FMCY, SAAG…IYPM, GYLP…LAIY, LACG…SYPF, and GITP…YVVY.

It belongs to the mitochondrial carrier (TC 2.A.29) family. In terms of assembly, homodimer (via N-terminus).

The protein localises to the mitochondrion inner membrane. In terms of biological role, mitochondrial and calcium-binding carrier that catalyzes the calcium-dependent exchange of cytoplasmic glutamate with mitochondrial aspartate across the mitochondrial inner membrane. The sequence is that of Putative calcium-binding mitochondrial carrier F55A11.4 from Caenorhabditis elegans.